Consider the following 432-residue polypeptide: Asparagine--tRNA ligase (432 aa).

Belongs to the class-II aminoacyl-tRNA synthetase family. Homodimer.

It is found in the cytoplasm. The catalysed reaction is tRNA(Asn) + L-asparagine + ATP = L-asparaginyl-tRNA(Asn) + AMP + diphosphate + H(+). This is Asparagine--tRNA ligase from Lactobacillus helveticus (strain DPC 4571).